The chain runs to 714 residues: ABC transporter B family member 28 (714 aa).

A run of 5 helical transmembrane segments spans residues 109-129 (LSVC…MPVF), 161-181 (IFTI…MAIL), 240-260 (ICIL…LMLA), 340-360 (VAVY…VKTG), and 361-381 (ELAV…TFAV). The ABC transmembrane type-1 domain occupies 109–393 (LSVCLLTLLG…LVNTFGDLRG (285 aa)). The ABC transporter domain occupies 470-708 (VCLDDVHFAY…KGSYASLVGT (239 aa)). 505-512 (GSSGAGKS) lines the ATP pocket.

This sequence belongs to the ABC transporter superfamily. ABCB family. Multidrug resistance exporter (TC 3.A.1.201) subfamily.

Its subcellular location is the membrane. The protein is ABC transporter B family member 28 (ABCB28) of Arabidopsis thaliana (Mouse-ear cress).